Consider the following 128-residue polypeptide: 3-aminoacrylate deaminase RutC (128 aa).

This sequence belongs to the RutC family.

The catalysed reaction is (Z)-3-aminoacrylate + H2O + H(+) = 3-oxopropanoate + NH4(+). Involved in pyrimidine catabolism. Catalyzes the deamination of 3-aminoacrylate to malonic semialdehyde, a reaction that can also occur spontaneously. RutC may facilitate the reaction and modulate the metabolic fitness, rather than catalyzing essential functions. The sequence is that of 3-aminoacrylate deaminase RutC from Pantoea ananatis (strain LMG 20103).